A 2430-amino-acid polypeptide reads, in one-letter code: Transcription factor HIVEP2 (2430 aa).

The interval 1–127 (MDTGDTALGQ…SLEGPPWLFP (127 aa)) is disordered. Composition is skewed to polar residues over residues 11-22 (KATSRSGETDSV) and 96-110 (HSLS…QGMT). 2 C2H2-type zinc fingers span residues 189-211 (YICP…IRSH) and 217-239 (YPCI…RKSH). Disordered regions lie at residues 271–302 (IHSD…PPVP), 374–418 (SEKK…NTNA), and 744–995 (AHGH…SGKH). Residues 381 to 418 (SEPSLNLLSPHSKGSTDSGYFSRSESAEQQISPPNTNA) are compositionally biased toward polar residues. Basic and acidic residues-rich tracts occupy residues 744–753 (AHGHSDRLDP) and 775–784 (DPDKMTDLGK). Residues 792-804 (SVIQHTNSLSRPN) are compositionally biased toward polar residues. Position 811 is a phosphoserine (serine 811). Over residues 853 to 863 (SKPTPSQQVPQ) the composition is skewed to polar residues. The segment covering 884 to 908 (RVTEEPDKPEKEKEAPTKEPEKPVE) has biased composition (basic and acidic residues). Positions 929–935 (PKKKRLR) match the Nuclear localization signal motif. Phosphoserine occurs at positions 942, 947, 1040, 1431, and 1435. Residues 944 to 974 (GESSFESTGTGLSRSPSQESNLSHSSSFSMS) are compositionally biased toward low complexity. Residues 1472 to 1584 (KKGLSRPQKP…GGQQEEEGKA (113 aa)) are disordered. Low complexity-rich tracts occupy residues 1499–1520 (SRSS…SASG) and 1560–1569 (SDMSMSPQSS). 2 C2H2-type zinc fingers span residues 1783-1805 (YICE…IRTH) and 1811-1835 (YVCK…SKAH). Disordered regions lie at residues 1848 to 1931 (SVDD…SSLP) and 1986 to 2117 (FQSK…SPRR). Residues 1850-1860 (DDTETEEAENM) show a composition bias toward acidic residues. Positions 1861–1871 (EELHKTSEKHS) are enriched in basic and acidic residues. Residues 1883-1909 (DAEESDGEDGDDNDDDDEDDDDFDDQG) are compositionally biased toward acidic residues. The span at 1991 to 2001 (TDSEPDKDRLD) shows a compositional bias: basic and acidic residues. Residues 2013–2037 (SSEPSSSPRDFSPSSYRSSPGYDSS) show a composition bias toward low complexity. Tandem repeats lie at residues 2037–2040 (SPCR), 2043–2046 (SPKR), 2055–2058 (SPRR), 2067–2070 (SPMR), 2073–2076 (SPRK), 2090–2093 (SPRR), 2096–2099 (SPRR), 2102–2105 (SPGK), 2114–2117 (SPRR), and 2129–2132 (SPRR). The interval 2037-2132 (SPCRDNSPKR…TTIRAPSPRR (96 aa)) is 10 X 4 AA tandem repeats of S-P-[RGMKC]-[RK]. Over residues 2062 to 2085 (PRRDLSPMRHLSPRKEAALRREMS) the composition is skewed to basic and acidic residues. Serine 2102 is modified (phosphoserine). Residues 2107-2116 (ITARRDLSPR) are compositionally biased toward basic and acidic residues. Disordered regions lie at residues 2226–2252 (PALS…GAPG), 2268–2309 (KQAP…QEEN), and 2352–2430 (SIRH…NQLH). Residues 2271-2289 (PQVLQSSGLPSSPSSPRLL) are compositionally biased toward low complexity. 2 positions are modified to phosphoserine: serine 2281 and serine 2285. Residues 2291–2301 (KQSTSEDSLNS) show a composition bias toward polar residues. Over residues 2371 to 2380 (PDLHDGEKDT) the composition is skewed to basic and acidic residues. The segment covering 2406 to 2417 (FQSSKELSLSTE) has biased composition (polar residues). Phosphoserine occurs at positions 2413 and 2415.

In terms of assembly, interacts with TCF4. As to expression, expressed in heart, lung, skeletal muscle and liver. In the brain expressed in cerebral cortex, hippocampus, corpora amygdala and cerebellar cortex.

The protein localises to the nucleus. Its function is as follows. Specifically binds to the DNA sequence 5'-GGGACTTTCC-3' which is found in the enhancer elements of numerous viral promoters such as those of SV40, CMV, or HIV1. In addition, related sequences are found in the enhancer elements of a number of cellular promoters, including those of the class I MHC, interleukin-2 receptor, somatostatin receptor II, and interferon-beta genes. It may act in T-cell activation. This is Transcription factor HIVEP2 (Hivep2) from Mus musculus (Mouse).